Reading from the N-terminus, the 598-residue chain is Transcription factor COE3 (598 aa).

The tract at residues 1–23 (MFGIQENIPRGGTTMKEEPLGGG) is disordered. Residues 63–66 (RKSN) are interaction with DNA. A C5-type zinc finger spans residues 151 to 170 (CRVLLTHEIMCSRCCDKKSC). Interaction with DNA stretches follow at residues 197–204 (NCLKNAGN) and 236–239 (NNSK). The IPT/TIG domain maps to 264 to 347 (PCIKAISPSE…KGAPGRFVYT (84 aa)). The segment at 452 to 483 (TSQANDQVGYSRNTSSVSPRGYVPSSTPQQSN) is disordered.

Belongs to the COE family. Forms either a homodimer or a heterodimer with a related family member.

It localises to the nucleus. Functionally, acts as a transcriptional activator. This is Transcription factor COE3 (coe3) from Xenopus laevis (African clawed frog).